The primary structure comprises 404 residues: Glucose-1-phosphate adenylyltransferase (404 aa).

Residues Y99, G164, 179–180 (EK), and S197 contribute to the alpha-D-glucose 1-phosphate site.

The protein belongs to the bacterial/plant glucose-1-phosphate adenylyltransferase family.

It carries out the reaction alpha-D-glucose 1-phosphate + ATP + H(+) = ADP-alpha-D-glucose + diphosphate. It participates in capsule biogenesis; capsule polysaccharide biosynthesis. It functions in the pathway glycan biosynthesis; glycogen biosynthesis. Functionally, involved in the biosynthesis of ADP-glucose, a building block, required in the biosynthesis of maltose-1-phosphate (M1P) and in the elongation reactions to produce linear alpha-1,4-glucans. Catalyzes the reaction between ATP and alpha-D-glucose 1-phosphate (G1P) to produce pyrophosphate and ADP-Glc. The polypeptide is Glucose-1-phosphate adenylyltransferase (Mycobacterium ulcerans (strain Agy99)).